A 405-amino-acid polypeptide reads, in one-letter code: Probable tRNA sulfurtransferase (405 aa).

One can recognise a THUMP domain in the interval 60 to 165; the sequence is DQVMARLSQV…REAIYLSTKT (106 aa). ATP contacts are provided by residues 183 to 184, 208 to 209, Arg265, Gly287, and Gln296; these read ML and HF.

It belongs to the ThiI family.

The protein localises to the cytoplasm. The catalysed reaction is [ThiI sulfur-carrier protein]-S-sulfanyl-L-cysteine + a uridine in tRNA + 2 reduced [2Fe-2S]-[ferredoxin] + ATP + H(+) = [ThiI sulfur-carrier protein]-L-cysteine + a 4-thiouridine in tRNA + 2 oxidized [2Fe-2S]-[ferredoxin] + AMP + diphosphate. The enzyme catalyses [ThiS sulfur-carrier protein]-C-terminal Gly-Gly-AMP + S-sulfanyl-L-cysteinyl-[cysteine desulfurase] + AH2 = [ThiS sulfur-carrier protein]-C-terminal-Gly-aminoethanethioate + L-cysteinyl-[cysteine desulfurase] + A + AMP + 2 H(+). The protein operates within cofactor biosynthesis; thiamine diphosphate biosynthesis. Its function is as follows. Catalyzes the ATP-dependent transfer of a sulfur to tRNA to produce 4-thiouridine in position 8 of tRNAs, which functions as a near-UV photosensor. Also catalyzes the transfer of sulfur to the sulfur carrier protein ThiS, forming ThiS-thiocarboxylate. This is a step in the synthesis of thiazole, in the thiamine biosynthesis pathway. The sulfur is donated as persulfide by IscS. This Lacticaseibacillus paracasei (strain ATCC 334 / BCRC 17002 / CCUG 31169 / CIP 107868 / KCTC 3260 / NRRL B-441) (Lactobacillus paracasei) protein is Probable tRNA sulfurtransferase.